The chain runs to 156 residues: Histidine-containing phosphotransfer protein 2 (156 aa).

At Met-1 the chain carries N-acetylmethionine. The region spanning 40–147 (SPDFVSEVLS…NLEKQIIQAG (108 aa)) is the HPt domain. Residue His-82 is modified to Phosphohistidine.

Interacts with the B-type response regulators ARR1, ARR2 and ARR10. Binds to AHK1, AHK2, AHK3, AHK4, AHK5, ETR1 and CKI1. In terms of processing, two-component system major event consists of a His-to-Asp phosphorelay between a sensor histidine kinase (HK) and a response regulator (RR). In plants, the His-to-Asp phosphorelay involves an additional intermediate named Histidine-containing phosphotransfer protein (HPt). This multistep phosphorelay consists of a His-Asp-His-Asp sequential transfer of a phosphate group between first a His and an Asp of the HK protein, followed by the transfer to a conserved His of the HPt protein and finally the transfer to an Asp in the receiver domain of the RR protein. Strongly expressed in flowers and roots. Detected also in leaves, siliques and stems.

It is found in the cytoplasm. It localises to the cytosol. The protein resides in the nucleus. In terms of biological role, functions as a two-component phosphorelay mediators between cytokinin sensor histidine kinases and response regulator (B-type ARRs). Plays an important role in propagating cytokinin signal transduction through the multistep His-to-Asp phosphorelay. The protein is Histidine-containing phosphotransfer protein 2 (AHP2) of Arabidopsis thaliana (Mouse-ear cress).